The primary structure comprises 517 residues: T-complex protein 11-like protein 2 (517 aa).

A disordered region spans residues 1–59 (MPFNGEKQYVNEDQQSDSESSRFSESTASLSDYGCSRQSFTSDSSSKSSSPASTSPPRG). Ser16 is subject to Phosphoserine. Residues 17–55 (DSESSRFSESTASLSDYGCSRQSFTSDSSSKSSSPASTS) show a composition bias toward low complexity.

Belongs to the TCP11 family. Interacts with FMNL2; this interaction promotes muscle-derived satellite cell (MDSC) migration and differentiation.

It localises to the cytoplasm. It is found in the cytoskeleton. Promotes the migration of muscle-derived satellite cells (MDSCs) during differentiation throught interaction with FMNL2 and therefore may participate in microfilament assembly. The sequence is that of T-complex protein 11-like protein 2 from Rattus norvegicus (Rat).